The chain runs to 189 residues: Elongation factor P (189 aa).

This sequence belongs to the elongation factor P family.

The protein localises to the cytoplasm. It participates in protein biosynthesis; polypeptide chain elongation. Its function is as follows. Involved in peptide bond synthesis. Stimulates efficient translation and peptide-bond synthesis on native or reconstituted 70S ribosomes in vitro. Probably functions indirectly by altering the affinity of the ribosome for aminoacyl-tRNA, thus increasing their reactivity as acceptors for peptidyl transferase. In Ehrlichia canis (strain Jake), this protein is Elongation factor P.